The sequence spans 576 residues: N-acetylmuramoyl-L-alanine amidase (576 aa).

Positions 1–21 are cleaved as a signal peptide; that stretch reads MAQGVLWILLGLLLWSDPGTA. An N-linked (GlcNAc...) asparagine glycan is attached at Asn-77. The residue at position 239 (Ser-239) is a Phosphoserine. A deamidated asparagine mark is found at Asn-274 and Asn-322. Asn-367 is a glycosylation site (N-linked (GlcNAc...) asparagine). Positions 406–532 constitute an N-acetylmuramoyl-L-alanine amidase domain; sequence FLYVHHTYVP…RQLVRTDCPG (127 aa). A Zn(2+)-binding site is contributed by His-410. Cys-419 and Cys-425 are joined by a disulfide. N-linked (GlcNAc...) asparagine glycosylation occurs at Asn-485. Zn(2+)-binding residues include His-522 and Cys-530. Positions 550–576 are disordered; the sequence is KPRPARSVSKRSRREPPPRTLPATDLQ.

Belongs to the N-acetylmuramoyl-L-alanine amidase 2 family. The cofactor is Zn(2+). As to expression, strongly expressed in liver and fetal liver, and secreted into serum. Expressed to a much lesser extent in transverse colon, lymph nodes, heart, thymus, pancreas, descending colon, stomach and testis. Isoform 2 is not detected in the liver or serum.

Its subcellular location is the secreted. It localises to the membrane. The catalysed reaction is Hydrolyzes the link between N-acetylmuramoyl residues and L-amino acid residues in certain cell-wall glycopeptides.. Its function is as follows. May play a scavenger role by digesting biologically active peptidoglycan (PGN) into biologically inactive fragments. Has no direct bacteriolytic activity. This is N-acetylmuramoyl-L-alanine amidase (PGLYRP2) from Homo sapiens (Human).